The following is a 335-amino-acid chain: Glyceraldehyde-3-phosphate dehydrogenase 2 (335 aa).

NAD(+)-binding positions include 12 to 13, Asp-35, Arg-79, and Ser-121; that span reads RI. D-glyceraldehyde 3-phosphate is bound by residues 152-154 and Thr-183; that span reads SCT. Cys-153 (nucleophile) is an active-site residue. Asn-184 lines the NAD(+) pocket. D-glyceraldehyde 3-phosphate is bound by residues Arg-198, 211 to 212, and Arg-234; that span reads TG. An NAD(+)-binding site is contributed by Asn-316.

It belongs to the glyceraldehyde-3-phosphate dehydrogenase family. Homotetramer.

The protein resides in the cytoplasm. The catalysed reaction is D-glyceraldehyde 3-phosphate + phosphate + NAD(+) = (2R)-3-phospho-glyceroyl phosphate + NADH + H(+). The protein operates within carbohydrate degradation; glycolysis; pyruvate from D-glyceraldehyde 3-phosphate: step 1/5. With respect to regulation, inhibited by pentalenolactone. Functionally, catalyzes the oxidative phosphorylation of glyceraldehyde 3-phosphate (G3P) to 1,3-bisphosphoglycerate (BPG) using the cofactor NAD. The first reaction step involves the formation of a hemiacetal intermediate between G3P and a cysteine residue, and this hemiacetal intermediate is then oxidized to a thioester, with concomitant reduction of NAD to NADH. The reduced NADH is then exchanged with the second NAD, and the thioester is attacked by a nucleophilic inorganic phosphate to produce BPG. In Streptomyces avermitilis (strain ATCC 31267 / DSM 46492 / JCM 5070 / NBRC 14893 / NCIMB 12804 / NRRL 8165 / MA-4680), this protein is Glyceraldehyde-3-phosphate dehydrogenase 2 (gap2).